The primary structure comprises 200 residues: Large ribosomal subunit protein uL4 (200 aa).

The interval 42–65 (TRAQKTRSEVSGGGAKPWRQKGTG) is disordered.

Belongs to the universal ribosomal protein uL4 family. Part of the 50S ribosomal subunit.

One of the primary rRNA binding proteins, this protein initially binds near the 5'-end of the 23S rRNA. It is important during the early stages of 50S assembly. It makes multiple contacts with different domains of the 23S rRNA in the assembled 50S subunit and ribosome. Its function is as follows. Forms part of the polypeptide exit tunnel. The chain is Large ribosomal subunit protein uL4 from Vibrio campbellii (strain ATCC BAA-1116).